A 982-amino-acid polypeptide reads, in one-letter code: NACHT, LRR and PYD domains-containing protein 4C (982 aa).

The Pyrin domain occupies 1-93 (MASFFSDFGL…MERAGREIAG (93 aa)). Residues 148–471 (HMVFLQGAAG…FYLLKSHMDH (324 aa)) form the NACHT domain. Position 154-161 (154-161 (GAAGIGKS)) interacts with ATP. LRR repeat units lie at residues 594 to 617 (CSTL…HSYT), 689 to 716 (NQCL…VLSQ), 746 to 773 (SKML…LCHP), 802 to 825 (NKTL…VLCG), 827 to 844 (LSLP…YCLI), 859 to 882 (NQNL…LLCD), and 916 to 940 (CKTL…LFEA).

It belongs to the NLRP family.

Its function is as follows. May be involved in inflammation and recognition of cytosolic pathogen-associated molecular patterns (PAMPs) not intercepted by membrane-bound receptors. This is NACHT, LRR and PYD domains-containing protein 4C (Nlrp4c) from Mus musculus (Mouse).